A 199-amino-acid polypeptide reads, in one-letter code: Holliday junction branch migration complex subunit RuvA (199 aa).

Residues 1-64 (MIARLTGMLA…EDAISLFGFR (64 aa)) form a domain I region. The interval 65–143 (TVAEKEFFQV…KMDVAPSTKE (79 aa)) is domain II. The segment at 144-154 (AAPSEAPPEVA) is flexible linker. The tract at residues 154–199 (ADDVASALVNLGYKEAVVRKVLAEMAIESGASTEAVLRQALKILMK) is domain III.

This sequence belongs to the RuvA family. In terms of assembly, homotetramer. Forms an RuvA(8)-RuvB(12)-Holliday junction (HJ) complex. HJ DNA is sandwiched between 2 RuvA tetramers; dsDNA enters through RuvA and exits via RuvB. An RuvB hexamer assembles on each DNA strand where it exits the tetramer. Each RuvB hexamer is contacted by two RuvA subunits (via domain III) on 2 adjacent RuvB subunits; this complex drives branch migration. In the full resolvosome a probable DNA-RuvA(4)-RuvB(12)-RuvC(2) complex forms which resolves the HJ.

The protein localises to the cytoplasm. The RuvA-RuvB-RuvC complex processes Holliday junction (HJ) DNA during genetic recombination and DNA repair, while the RuvA-RuvB complex plays an important role in the rescue of blocked DNA replication forks via replication fork reversal (RFR). RuvA specifically binds to HJ cruciform DNA, conferring on it an open structure. The RuvB hexamer acts as an ATP-dependent pump, pulling dsDNA into and through the RuvAB complex. HJ branch migration allows RuvC to scan DNA until it finds its consensus sequence, where it cleaves and resolves the cruciform DNA. The chain is Holliday junction branch migration complex subunit RuvA from Geobacter metallireducens (strain ATCC 53774 / DSM 7210 / GS-15).